Reading from the N-terminus, the 420-residue chain is MTRTAKLTIIPPGKPLSGRAMPPGSKSITNRALLLAGLAKGTSRLTGALKSDDTRYMADALRAMGVAIDEPDDTTFVVTGSGRLTPPKAPLFLGNAGTATRFLTAAAALVDGTVIVDGDEHMRKRPIGPLVEAMRKLGIDVSAETGCPPVTVRGTGRFEADRILIDGGLSSQYVSALLMMAAGGDRPVDIELVGEDIGALGYIDLTTAAMKAFGAKVEKTSPVTWRVEPTGYRAADFVIEPDASAATYLWAAEVLSDGRIDLGVPNDAFTQPDAKAYETIAKFPHLPAEIDGSQMQDAVPTIAVLAAFNETPVRFVGIANLRVKECDRIRALSSGLNNIREGLAVEEGDDLIVHSDPALAGQTLPAEIDTFADHRIAMSFALAGLKIGGITILDPDCVGKTFPAYWRTLATLGVTYRDKD.

The 3-phosphoshikimate site is built by lysine 26, serine 27, and arginine 31. Lysine 26 provides a ligand contact to phosphoenolpyruvate. Positions 97 and 125 each coordinate phosphoenolpyruvate. 3-phosphoshikimate-binding residues include serine 170, serine 171, glutamine 172, aspartate 297, asparagine 320, and lysine 324. Residue glutamine 172 participates in phosphoenolpyruvate binding. Catalysis depends on aspartate 297, which acts as the Proton acceptor. Phosphoenolpyruvate-binding residues include arginine 328, arginine 375, and lysine 400.

The protein belongs to the EPSP synthase family. Monomer.

Its subcellular location is the cytoplasm. It catalyses the reaction 3-phosphoshikimate + phosphoenolpyruvate = 5-O-(1-carboxyvinyl)-3-phosphoshikimate + phosphate. It participates in metabolic intermediate biosynthesis; chorismate biosynthesis; chorismate from D-erythrose 4-phosphate and phosphoenolpyruvate: step 6/7. Its function is as follows. Catalyzes the transfer of the enolpyruvyl moiety of phosphoenolpyruvate (PEP) to the 5-hydroxyl of shikimate-3-phosphate (S3P) to produce enolpyruvyl shikimate-3-phosphate and inorganic phosphate. The sequence is that of 3-phosphoshikimate 1-carboxyvinyltransferase from Rhizobium etli (strain ATCC 51251 / DSM 11541 / JCM 21823 / NBRC 15573 / CFN 42).